Reading from the N-terminus, the 167-residue chain is Small ribosomal subunit protein uS7c (167 aa).

It belongs to the universal ribosomal protein uS7 family. In terms of assembly, part of the 30S ribosomal subunit.

It localises to the plastid. The protein localises to the chloroplast. Functionally, one of the primary rRNA binding proteins, it binds directly to 16S rRNA where it nucleates assembly of the head domain of the 30S subunit. The polypeptide is Small ribosomal subunit protein uS7c (rps7) (Tetradesmus obliquus (Green alga)).